The primary structure comprises 270 residues: 4-hydroxy-tetrahydrodipicolinate reductase (270 aa).

NAD(+) is bound by residues 11–16 (GASGRM) and Glu-37. Arg-38 is an NADP(+) binding site. NAD(+)-binding positions include 101-103 (GTT) and 125-128 (SPNM). His-158 (proton donor/acceptor) is an active-site residue. His-159 contacts (S)-2,3,4,5-tetrahydrodipicolinate. Lys-162 acts as the Proton donor in catalysis. 168–169 (GT) provides a ligand contact to (S)-2,3,4,5-tetrahydrodipicolinate.

It belongs to the DapB family.

The protein localises to the cytoplasm. It carries out the reaction (S)-2,3,4,5-tetrahydrodipicolinate + NAD(+) + H2O = (2S,4S)-4-hydroxy-2,3,4,5-tetrahydrodipicolinate + NADH + H(+). It catalyses the reaction (S)-2,3,4,5-tetrahydrodipicolinate + NADP(+) + H2O = (2S,4S)-4-hydroxy-2,3,4,5-tetrahydrodipicolinate + NADPH + H(+). It functions in the pathway amino-acid biosynthesis; L-lysine biosynthesis via DAP pathway; (S)-tetrahydrodipicolinate from L-aspartate: step 4/4. In terms of biological role, catalyzes the conversion of 4-hydroxy-tetrahydrodipicolinate (HTPA) to tetrahydrodipicolinate. This chain is 4-hydroxy-tetrahydrodipicolinate reductase, found in Shewanella denitrificans (strain OS217 / ATCC BAA-1090 / DSM 15013).